An 85-amino-acid polypeptide reads, in one-letter code: Hepcidin (85 aa).

The N-terminal stretch at 1 to 24 (MKTFSVAVAVAVVLAFICLQESSA) is a signal peptide. A propeptide spanning residues 25–64 (VPANEEQELEQQIYFADPEMPVESCKMPYYMRENRQGSPA) is cleaved from the precursor. 4 disulfides stabilise this stretch: Cys-66/Cys-83, Cys-69/Cys-72, Cys-70/Cys-79, and Cys-73/Cys-82.

As to quaternary structure, monomer. In terms of tissue distribution, expressed in all tissues tested, with highest levels of expression in kidney and lowest levels in liver. Intra-peritoneal injection of lipopolysaccharide results in increased expression in heart, spleen and stomach, but not in kidney or liver.

The protein localises to the secreted. Seems to act as a signaling molecule involved in the maintenance of iron homeostasis. Seems to be required in conjunction with HFE to regulate both intestinal iron absorption and iron storage in macrophages. Its function is as follows. Has very strong antibacterial activity against the marine Gram-negative bacteria V.alginolyticus (MIC=24 uM), V.fluvialis, V.harveyis (MIC=12 uM) and V.parahaemolyticus (MIC=6 uM). Has antibacterial activity against the Gram-negative bacteria A.hydrophila (MIC=6 uM), E.coli (MIC=24 uM), and E.coli BL21(DE3)plysS (MIC=6 uM), and the Gram-positive bacteria B.cereus (MIC=24 uM), B.subtilis (MIC=6 uM), C.glutamicum (MIC=3 uM), M.luteus (MIC=3 uM), M.lysodeikticus, S.aureus (MIC=6 uM) and S.epidermis (MIC=12 uM). Possesses antifungal activity against A.niger (MIC=24 uM), F.graminearum (MIC24 uM) and F.solani (MIC=24 uM), but lacks antifungal activity against the yeasts P.pastoris GS115 and C.albicans. The sequence is that of Hepcidin from Larimichthys crocea (Large yellow croaker).